Here is a 394-residue protein sequence, read N- to C-terminus: NAD(P)H-quinone oxidoreductase subunit H (394 aa).

It belongs to the complex I 49 kDa subunit family. As to quaternary structure, NDH-1 can be composed of about 15 different subunits; different subcomplexes with different compositions have been identified which probably have different functions.

The protein localises to the cellular thylakoid membrane. It catalyses the reaction a plastoquinone + NADH + (n+1) H(+)(in) = a plastoquinol + NAD(+) + n H(+)(out). It carries out the reaction a plastoquinone + NADPH + (n+1) H(+)(in) = a plastoquinol + NADP(+) + n H(+)(out). Its function is as follows. NDH-1 shuttles electrons from an unknown electron donor, via FMN and iron-sulfur (Fe-S) centers, to quinones in the respiratory and/or the photosynthetic chain. The immediate electron acceptor for the enzyme in this species is believed to be plastoquinone. Couples the redox reaction to proton translocation, and thus conserves the redox energy in a proton gradient. Cyanobacterial NDH-1 also plays a role in inorganic carbon-concentration. In Synechococcus sp. (strain JA-3-3Ab) (Cyanobacteria bacterium Yellowstone A-Prime), this protein is NAD(P)H-quinone oxidoreductase subunit H.